The following is a 176-amino-acid chain: NADH-quinone oxidoreductase subunit I 2 (176 aa).

4Fe-4S ferredoxin-type domains are found at residues 45 to 77 (IVLTRDPDGGERCVACYLCSAACPVDCISMEAA) and 87 to 116 (RWFRINFSRCIFCGLCAEACPTLAIQMTPD). [4Fe-4S] cluster is bound by residues cysteine 57, cysteine 60, cysteine 63, cysteine 67, cysteine 96, cysteine 99, cysteine 102, and cysteine 106.

The protein belongs to the complex I 23 kDa subunit family. As to quaternary structure, NDH-1 is composed of 14 different subunits. Subunits NuoA, H, J, K, L, M, N constitute the membrane sector of the complex. It depends on [4Fe-4S] cluster as a cofactor.

Its subcellular location is the cell inner membrane. It catalyses the reaction a quinone + NADH + 5 H(+)(in) = a quinol + NAD(+) + 4 H(+)(out). NDH-1 shuttles electrons from NADH, via FMN and iron-sulfur (Fe-S) centers, to quinones in the respiratory chain. The immediate electron acceptor for the enzyme in this species is believed to be ubiquinone. Couples the redox reaction to proton translocation (for every two electrons transferred, four hydrogen ions are translocated across the cytoplasmic membrane), and thus conserves the redox energy in a proton gradient. The polypeptide is NADH-quinone oxidoreductase subunit I 2 (Geobacter sulfurreducens (strain ATCC 51573 / DSM 12127 / PCA)).